The chain runs to 424 residues: 3-phosphoshikimate 1-carboxyvinyltransferase (424 aa).

3-phosphoshikimate contacts are provided by K21, S22, and R26. K21 serves as a coordination point for phosphoenolpyruvate. The phosphoenolpyruvate site is built by G91 and R119. 4 residues coordinate 3-phosphoshikimate: S164, Q166, D310, and K337. A phosphoenolpyruvate-binding site is contributed by Q166. D310 functions as the Proton acceptor in the catalytic mechanism. Phosphoenolpyruvate-binding residues include R341 and R382.

It belongs to the EPSP synthase family. As to quaternary structure, monomer.

The protein resides in the cytoplasm. The catalysed reaction is 3-phosphoshikimate + phosphoenolpyruvate = 5-O-(1-carboxyvinyl)-3-phosphoshikimate + phosphate. The protein operates within metabolic intermediate biosynthesis; chorismate biosynthesis; chorismate from D-erythrose 4-phosphate and phosphoenolpyruvate: step 6/7. Functionally, catalyzes the transfer of the enolpyruvyl moiety of phosphoenolpyruvate (PEP) to the 5-hydroxyl of shikimate-3-phosphate (S3P) to produce enolpyruvyl shikimate-3-phosphate and inorganic phosphate. The protein is 3-phosphoshikimate 1-carboxyvinyltransferase of Campylobacter hominis (strain ATCC BAA-381 / DSM 21671 / CCUG 45161 / LMG 19568 / NCTC 13146 / CH001A).